A 203-amino-acid polypeptide reads, in one-letter code: Probable nicotinate-nucleotide adenylyltransferase (203 aa).

The protein belongs to the NadD family.

The enzyme catalyses nicotinate beta-D-ribonucleotide + ATP + H(+) = deamido-NAD(+) + diphosphate. Its pathway is cofactor biosynthesis; NAD(+) biosynthesis; deamido-NAD(+) from nicotinate D-ribonucleotide: step 1/1. In terms of biological role, catalyzes the reversible adenylation of nicotinate mononucleotide (NaMN) to nicotinic acid adenine dinucleotide (NaAD). In Clostridium kluyveri (strain ATCC 8527 / DSM 555 / NBRC 12016 / NCIMB 10680 / K1), this protein is Probable nicotinate-nucleotide adenylyltransferase.